The sequence spans 472 residues: Ribulose bisphosphate carboxylase large chain (472 aa).

Asn-120 and Thr-170 together coordinate substrate. Lys-172 serves as the catalytic Proton acceptor. Lys-174 is a substrate binding site. Positions 198, 200, and 201 each coordinate Mg(2+). An N6-carboxylysine modification is found at Lys-198. His-291 (proton acceptor) is an active-site residue. Arg-292, His-324, and Ser-376 together coordinate substrate. An Interacts with RbcX2 motif is present at residues 461–467 (EIKFEFE).

Belongs to the RuBisCO large chain family. Type I subfamily. In terms of assembly, heterohexadecamer of 8 large chains and 8 small chains; disulfide-linked. The disulfide link is formed within the large subunit homodimers. The exposed C-terminus binds in a cleft in the RbcX2 (shown with endogenous and Anabaena strain CA protein). RbcX2 is displaced by RbcS; as RbcX2 is removed RbcS mediates the ordering of an internal RbcL loop (Thr-64-Leu-70) in a catalytically active conformation. The cofactor is Mg(2+). Post-translationally, the disulfide bond which can form in the large chain dimeric partners within the hexadecamer appears to be associated with oxidative stress and protein turnover.

It is found in the carboxysome. The enzyme catalyses 2 (2R)-3-phosphoglycerate + 2 H(+) = D-ribulose 1,5-bisphosphate + CO2 + H2O. It catalyses the reaction D-ribulose 1,5-bisphosphate + O2 = 2-phosphoglycolate + (2R)-3-phosphoglycerate + 2 H(+). Functionally, ruBisCO catalyzes two reactions: the carboxylation of D-ribulose 1,5-bisphosphate, the primary event in carbon dioxide fixation, as well as the oxidative fragmentation of the pentose substrate in the photorespiration process. Both reactions occur simultaneously and in competition at the same active site. In Synechococcus sp. (strain ATCC 27144 / PCC 6301 / SAUG 1402/1) (Anacystis nidulans), this protein is Ribulose bisphosphate carboxylase large chain (cbbL).